The chain runs to 533 residues: Nuclear receptor corepressor 1 (533 aa).

Positions 1–17 are enriched in basic and acidic residues; it reads KDKGPPPKSRYEEELRT. Residues 1 to 21 form a disordered region; it reads KDKGPPPKSRYEEELRTRGKT. Positions 29 to 33 match the CORNR box 1 motif; the sequence is IDVII. Residues 37-144 form a disordered region; the sequence is IASDKDARER…EGMGQVPRTH (108 aa). Residues 38–47 show a composition bias toward basic and acidic residues; it reads ASDKDARERG. Positions 48–59 are enriched in low complexity; the sequence is SQSSDSSSSLSS. Phosphoserine is present on residues Ser-73 and Ser-77. The segment at 130 to 209 is ID1; sequence PSSQAEGMGQ…QSQTVLHPRP (80 aa). The interval 145–148 is required for interaction with RARA in the absence of its ligand; the sequence is RLIT. Positions 153 to 157 match the CORNR box 2 motif; that stretch reads ICQII. Positions 165–180 are enriched in low complexity; that stretch reads QVPSQPSTSTFQTSPS. Residues 165 to 254 are disordered; sequence QVPSQPSTST…SPPQGPAVHE (90 aa). Polar residues predominate over residues 181–204; sequence ALSSTPVRTKPSSRYSPESQSQTV. A phosphoserine mark is found at Ser-196, Ser-214, Ser-230, Ser-245, and Ser-278. Basic and acidic residues predominate over residues 218-236; sequence LVDKSRGSRPGKSPERSHI. The tract at residues 306–367 is ID2; the sequence is IFRKLNSSGG…EDIIRKALMG (62 aa). Residues 357-361 carry the CORNR box 3 motif; it reads LEDII. A compositionally biased stretch (low complexity) spans 382-399; sequence HPVGVVPGSASTSVVTSS. The interval 382–476 is disordered; the sequence is HPVGVVPGSA…RPSSTGSTQF (95 aa). Thr-492 carries the phosphothreonine modification. Phosphoserine is present on residues Ser-529 and Ser-531.

The protein belongs to the N-CoR nuclear receptor corepressors family. As to quaternary structure, forms a large corepressor complex that contains SIN3A/B and histone deacetylases HDAC1 and HDAC2. This complex associates with the thyroid receptor (TR) and the retinoid acid receptor (RAR) in the absence of ligand. Interacts directly with RARA; the interaction is facilitated with RARA trimethylation. Component of the N-Cor repressor complex, at least composed of CBFA2T3, HEXIM1, NCOR1, NCOR2, HDAC3, TBL1X, TBL1XR1, CORO2A and GPS2. Interacts with ZBTB33; the interaction serves to recruit the N-CoR complex to promoter regions containing methylated CpG dinucleotides. Interacts with TRIM28 and KDM3A. Interacts (via the RD1 domain) with BAZ1A (via its N-terminal); the interaction corepresses a number of NCOR1-regulated genes. Interacts with BCL6, C1D, DACH1, HEXIM1, HDAC7, RORA, RORC, SAP30, SIAH2, SIN3A and SIN3B. May interact with DEAF1. Interacts with RXRA. Interacts with SETD5. Interacts with VDR. Interacts with ZBTB7A. Interacts with AR. Interacts with HDAC3. In terms of processing, ubiquitinated; mediated by SIAH2 and leading to its subsequent proteasomal degradation.

It is found in the nucleus. In terms of biological role, mediates transcriptional repression by certain nuclear receptors. Part of a complex which promotes histone deacetylation and the formation of repressive chromatin structures which may impede the access of basal transcription factors. Participates in the transcriptional repressor activity produced by BCL6. Recruited by ZBTB7A to the androgen response elements/ARE on target genes, negatively regulates androgen receptor signaling and androgen-induced cell proliferation. Mediates the NR1D1-dependent repression and circadian regulation of TSHB expression. The NCOR1-HDAC3 complex regulates the circadian expression of the core clock gene ARTNL/BMAL1 and the genes involved in lipid metabolism in the liver. The polypeptide is Nuclear receptor corepressor 1 (Ncor1) (Rattus norvegicus (Rat)).